Reading from the N-terminus, the 305-residue chain is tRNA-cytidine(32) 2-sulfurtransferase (305 aa).

Positions 1-20 (MTAVLPLPQPLADPAPRDPR) are disordered. Positions 59 to 64 (SGGKDS) match the PP-loop motif motif. 3 residues coordinate [4Fe-4S] cluster: cysteine 134, cysteine 137, and cysteine 225. Residues 282–293 (DAPSDVDPDPSA) show a composition bias toward low complexity. Residues 282-305 (DAPSDVDPDPSAWLSASHAPHDSD) form a disordered region.

Belongs to the TtcA family. Homodimer. Mg(2+) serves as cofactor. Requires [4Fe-4S] cluster as cofactor.

It localises to the cytoplasm. It catalyses the reaction cytidine(32) in tRNA + S-sulfanyl-L-cysteinyl-[cysteine desulfurase] + AH2 + ATP = 2-thiocytidine(32) in tRNA + L-cysteinyl-[cysteine desulfurase] + A + AMP + diphosphate + H(+). Its pathway is tRNA modification. Functionally, catalyzes the ATP-dependent 2-thiolation of cytidine in position 32 of tRNA, to form 2-thiocytidine (s(2)C32). The sulfur atoms are provided by the cysteine/cysteine desulfurase (IscS) system. The protein is tRNA-cytidine(32) 2-sulfurtransferase of Xanthomonas euvesicatoria pv. vesicatoria (strain 85-10) (Xanthomonas campestris pv. vesicatoria).